A 496-amino-acid polypeptide reads, in one-letter code: Probable zinc metalloprotease SNOG_06590 (496 aa).

Residues 1-20 (MRSSMFFAVCAAAALQTALS) form the signal peptide. The N-linked (GlcNAc...) asparagine glycan is linked to Asn-138. Zn(2+)-binding residues include His-161, Asp-181, and Glu-226. A glycan (N-linked (GlcNAc...) asparagine) is linked at Asn-241. Residue Asp-253 participates in Zn(2+) binding. N-linked (GlcNAc...) asparagine glycans are attached at residues Asn-282, Asn-361, Asn-409, Asn-415, and Asn-457. In terms of domain architecture, Fibronectin type-III spans 402-496 (EPMNVGINTT…PFPFGCTRNC (95 aa)).

It belongs to the peptidase M28 family. M28B subfamily. The cofactor is Zn(2+).

The protein resides in the secreted. This Phaeosphaeria nodorum (strain SN15 / ATCC MYA-4574 / FGSC 10173) (Glume blotch fungus) protein is Probable zinc metalloprotease SNOG_06590.